Consider the following 493-residue polypeptide: MNREEFLRLAAVGYNRIPLACETLADFDTPLSIYLKLADQPNSYLLESVQGGEKWGRYSMIGLPSRTVMRVHGYHVSILHDGVEVESHDVEDPLAFVESFKDRYKVADIPGLPRFNGGLVGYFGYDCVRYVEKRLGVSPNPDPLGVPDILLMVSDAVVVFDNLAGKMHAIVLVDPAEEQAFEQGQARLQGLLETLRQPITPRRGLDLSGPQAAEPEFRSSYTREDYENAVGRIKEYILAGDCMQVVPSQRMSIDFKAAPIDLYRALRCFNPTPYMYFFNFGDFHVVGSSPEVLVRVEDNLVTVRPIAGTRPRGATEEADRALEDDLLSDDKEIAEHLMLIDLGRNDVGRVSSTGSVRLTEKMVIERYSNVMHIVSNVAGQLREGLTAMDALRAILPAGTLSGAPKIRAMEIIDELEPVKRGVYGGAVGYFAWNGNMDTAIAIRTAVINDGELHVQAGGGIVADSVPALEWEETINKRRAMFRAVALAEQTSAK.

L-tryptophan contacts are provided by residues serine 48 and 273-275 (PYM). Residue 308-309 (GT) participates in chorismate binding. A Mg(2+)-binding site is contributed by glutamate 335. Residues tyrosine 423, arginine 443, 457 to 459 (GGG), and glycine 459 each bind chorismate. Glutamate 472 serves as a coordination point for Mg(2+).

Belongs to the anthranilate synthase component I family. As to quaternary structure, heterotetramer consisting of two non-identical subunits: a beta subunit (TrpG) and a large alpha subunit (TrpE). Mg(2+) serves as cofactor.

The enzyme catalyses chorismate + L-glutamine = anthranilate + pyruvate + L-glutamate + H(+). It functions in the pathway amino-acid biosynthesis; L-tryptophan biosynthesis; L-tryptophan from chorismate: step 1/5. Feedback inhibited by tryptophan. In terms of biological role, part of a heterotetrameric complex that catalyzes the two-step biosynthesis of anthranilate, an intermediate in the biosynthesis of L-tryptophan. In the first step, the glutamine-binding beta subunit (TrpG) of anthranilate synthase (AS) provides the glutamine amidotransferase activity which generates ammonia as a substrate that, along with chorismate, is used in the second step, catalyzed by the large alpha subunit of AS (TrpE) to produce anthranilate. In the absence of TrpG, TrpE can synthesize anthranilate directly from chorismate and high concentrations of ammonia. The sequence is that of Anthranilate synthase component 1 (trpE) from Pseudomonas putida (Arthrobacter siderocapsulatus).